The chain runs to 570 residues: Proline--tRNA ligase (570 aa).

The protein belongs to the class-II aminoacyl-tRNA synthetase family. ProS type 1 subfamily. As to quaternary structure, homodimer.

The protein localises to the cytoplasm. The catalysed reaction is tRNA(Pro) + L-proline + ATP = L-prolyl-tRNA(Pro) + AMP + diphosphate. Functionally, catalyzes the attachment of proline to tRNA(Pro) in a two-step reaction: proline is first activated by ATP to form Pro-AMP and then transferred to the acceptor end of tRNA(Pro). As ProRS can inadvertently accommodate and process non-cognate amino acids such as alanine and cysteine, to avoid such errors it has two additional distinct editing activities against alanine. One activity is designated as 'pretransfer' editing and involves the tRNA(Pro)-independent hydrolysis of activated Ala-AMP. The other activity is designated 'posttransfer' editing and involves deacylation of mischarged Ala-tRNA(Pro). The misacylated Cys-tRNA(Pro) is not edited by ProRS. The polypeptide is Proline--tRNA ligase (Neisseria meningitidis serogroup A / serotype 4A (strain DSM 15465 / Z2491)).